The following is an 874-amino-acid chain: Oxidation resistance protein 1 (874 aa).

Residues methionine 1 to arginine 89 are disordered. The span at arginine 64 to arginine 89 shows a compositional bias: basic and acidic residues. Serine 91 carries the post-translational modification Phosphoserine. The region spanning isoleucine 99–valine 142 is the LysM domain. Threonine 119 bears the Phosphothreonine mark. Residues valine 151 to glutamate 169 show a composition bias toward low complexity. Residues valine 151–isoleucine 194 are disordered. A phosphoserine mark is found at serine 201, serine 202, and serine 204. The 68-residue stretch at glutamate 208–lysine 275 folds into the GRAM domain. Phosphoserine is present on residues serine 294, serine 334, and serine 336. 2 disordered regions span residues cysteine 299–valine 406 and phenylalanine 431–alanine 537. Threonine 341 is subject to Phosphothreonine. Position 346 is a phosphoserine (serine 346). Residues proline 347–lysine 362 are compositionally biased toward basic and acidic residues. The span at serine 363 to threonine 391 shows a compositional bias: polar residues. The span at serine 452–lysine 466 shows a compositional bias: basic and acidic residues. Serine 496 carries the phosphoserine modification. Residues histidine 510 to glutamine 527 show a composition bias toward polar residues. Residues glutamine 551–threonine 578 form a mediates oxidative antimutator activity region. Residues glutamate 713–glutamate 874 form the TLDc domain.

Belongs to the OXR1 family.

Its subcellular location is the mitochondrion. In terms of biological role, may be involved in protection from oxidative damage. This is Oxidation resistance protein 1 (OXR1) from Homo sapiens (Human).